The sequence spans 1489 residues: Type-2 histone deacetylase 1 (1489 aa).

Low complexity-rich tracts occupy residues 135-163 (NNNN…SPSG), 190-259 (SNGN…SRNL), 281-306 (NIIN…TSTT), and 325-399 (SPTS…NINN). Disordered regions lie at residues 135–259 (NNNN…SRNL), 281–556 (NIIN…NYQQ), 915–935 (NNNN…DDQL), 955–1024 (NISK…RDRD), and 1151–1185 (STGI…GEQC). The span at 400–430 (VANGTPRPSLQTSRLQGKLPSPQQYNTSPSH) shows a compositional bias: polar residues. Low complexity-rich tracts occupy residues 431 to 450 (QQYP…PIQS), 486 to 553 (NNNN…NNSN), 915 to 928 (NNNN…NNNN), and 959 to 988 (NNNN…NNNN). 2 stretches are compositionally biased toward basic and acidic residues: residues 989–1001 (RNRD…ERDN) and 1010–1024 (IEKE…RDRD). A compositionally biased stretch (low complexity) spans 1158–1180 (STSTPITTTGTATVTPGSTTSST). The Proton acceptor role is filled by His-1232. A compositionally biased stretch (acidic residues) spans 1325 to 1335 (EQNDYDDDDNN). The tract at residues 1325–1374 (EQNDYDDDDNNNDVNNNNNNNNNNNNNNNNNNNNKNNNNNNSNSITQQST) is disordered. The segment covering 1336–1367 (NDVNNNNNNNNNNNNNNNNNNNNKNNNNNNSN) has biased composition (low complexity).

Belongs to the histone deacetylase family. HD type 2 subfamily.

The protein resides in the nucleus. Its subcellular location is the cytoplasm. The enzyme catalyses N(6)-acetyl-L-lysyl-[histone] + H2O = L-lysyl-[histone] + acetate. Functionally, responsible for the deacetylation of lysine residues on the N-terminal part of the core histones (H2A, H2B, H3 and H4). Histone deacetylation plays an important role in transcriptional regulation, cell cycle progression and developmental events. Histone deacetylases act via the formation of large multiprotein complexes. The chain is Type-2 histone deacetylase 1 (hdaD) from Dictyostelium discoideum (Social amoeba).